Reading from the N-terminus, the 129-residue chain is Insulin-like growth factor 2 (129 aa).

Positions 1–24 (MGVPMGKSLLAPLTFLALASCCFA) are cleaved as a signal peptide. Residues 25-52 (AYRPSETLCGGELVDTLQFVCGDRGFYF) are b. 3 cysteine pairs are disulfide-bonded: cysteine 33–cysteine 72, cysteine 45–cysteine 85, and cysteine 71–cysteine 76. The tract at residues 53-65 (SRPASRVSRRSSR) is c. The a stretch occupies residues 66-86 (GIVEECCFRSCDLALLETYCA). Residues 87–92 (TPAKSE) are d. Residues 93–129 (RDVSTPPTVLPDNFPRYPVGKFFQYDTWKQSAQRLRR) constitute a propeptide, e peptide.

It belongs to the insulin family. As to quaternary structure, interacts with MYORG; this interaction is required for IGF2 secretion. Interacts with integrins ITGAV:ITGB3 and ITGA6:ITGB4; integrin-binding is required for IGF2 signaling. In terms of processing, proteolytically processed by PCSK4, proIGF2 is cleaved at Arg-129 and Arg-92 to generate big-IGF2 and mature IGF2.

It is found in the secreted. In terms of biological role, the insulin-like growth factors possess growth-promoting activity. Major fetal growth hormone in mammals. Plays a key role in regulating fetoplacental development. IGF2 is influenced by placental lactogen. Also involved in tissue differentiation. In adults, involved in glucose metabolism in adipose tissue, skeletal muscle and liver. Acts as a ligand for integrin which is required for IGF2 signaling. Positively regulates myogenic transcription factor MYOD1 function by facilitating the recruitment of transcriptional coactivators, thereby controlling muscle terminal differentiation. Inhibits myoblast differentiation and modulates metabolism via increasing the mitochondrial respiration rate. Its function is as follows. Preptin undergoes glucose-mediated co-secretion with insulin, and acts as a physiological amplifier of glucose-mediated insulin secretion. Exhibits osteogenic properties by increasing osteoblast mitogenic activity through phosphoactivation of MAPK1 and MAPK3. In Neovison vison (American mink), this protein is Insulin-like growth factor 2.